Here is a 378-residue protein sequence, read N- to C-terminus: tRNA N(3)-cytidine methyltransferase METTL2 (378 aa).

Trp-78, Tyr-82, Gly-188, Asp-213, Asp-239, Leu-240, and Ile-260 together coordinate S-adenosyl-L-methionine.

It belongs to the methyltransferase superfamily. METL family. Monomer. Interacts with DALRD3.

Its subcellular location is the cytoplasm. It catalyses the reaction cytidine(32) in tRNA(Thr) + S-adenosyl-L-methionine = N(3)-methylcytidine(32) in tRNA(Thr) + S-adenosyl-L-homocysteine + H(+). The catalysed reaction is cytidine(32) in tRNA(Arg)(CCU) + S-adenosyl-L-methionine = N(3)-methylcytidine(32) in tRNA(Arg)(CCU) + S-adenosyl-L-homocysteine + H(+). Functionally, S-adenosyl-L-methionine-dependent methyltransferase that mediates N(3)-methylcytidine modification of residue 32 of the tRNA anticodon loop of tRNA(Thr)(UGU) and tRNA(Arg)(CCU). N(3)-methylcytidine methylation by METTL2 requires the N6-threonylcarbamoylation of tRNA (t6A37) by the EKC/KEOPS complex as prerequisite. In Bos taurus (Bovine), this protein is tRNA N(3)-cytidine methyltransferase METTL2 (METTL2).